A 334-amino-acid polypeptide reads, in one-letter code: Protein-methionine-sulfoxide reductase catalytic subunit MsrP (334 aa).

The tat-type signal signal peptide spans 1–44 (MKKNQFLKESDVTAESVFFMKRRQVLKALGISATALSLPHAAHA). Mo-molybdopterin contacts are provided by residues Asn-88, 91–92 (YE), Cys-146, Thr-181, Asn-233, Arg-238, and 249–251 (GIK).

The protein belongs to the MsrP family. Heterodimer of a catalytic subunit (MsrP) and a heme-binding subunit (MsrQ). Requires Mo-molybdopterin as cofactor. Post-translationally, predicted to be exported by the Tat system. The position of the signal peptide cleavage has not been experimentally proven.

The protein localises to the periplasm. The catalysed reaction is L-methionyl-[protein] + a quinone + H2O = L-methionyl-(S)-S-oxide-[protein] + a quinol. The enzyme catalyses L-methionyl-[protein] + a quinone + H2O = L-methionyl-(R)-S-oxide-[protein] + a quinol. Its function is as follows. Part of the MsrPQ system that repairs oxidized periplasmic proteins containing methionine sulfoxide residues (Met-O), using respiratory chain electrons. Thus protects these proteins from oxidative-stress damage caused by reactive species of oxygen and chlorine generated by the host defense mechanisms. MsrPQ is essential for the maintenance of envelope integrity under bleach stress, rescuing a wide series of structurally unrelated periplasmic proteins from methionine oxidation, including the primary periplasmic chaperone SurA and the lipoprotein Pal. The catalytic subunit MsrP is non-stereospecific, being able to reduce both (R-) and (S-) diastereoisomers of methionine sulfoxide. The chain is Protein-methionine-sulfoxide reductase catalytic subunit MsrP from Escherichia coli (strain K12 / MC4100 / BW2952).